The chain runs to 242 residues: Glucosamine-6-phosphate deaminase (242 aa).

D71 functions as the Proton acceptor; for enolization step in the catalytic mechanism. The For ring-opening step role is filled by N142. The active-site Proton acceptor; for ring-opening step is H144. The For ring-opening step role is filled by E149.

It belongs to the glucosamine/galactosamine-6-phosphate isomerase family. NagB subfamily.

It catalyses the reaction alpha-D-glucosamine 6-phosphate + H2O = beta-D-fructose 6-phosphate + NH4(+). The protein operates within amino-sugar metabolism; N-acetylneuraminate degradation; D-fructose 6-phosphate from N-acetylneuraminate: step 5/5. Catalyzes the reversible isomerization-deamination of glucosamine 6-phosphate (GlcN6P) to form fructose 6-phosphate (Fru6P) and ammonium ion. The protein is Glucosamine-6-phosphate deaminase of Malacoplasma penetrans (strain HF-2) (Mycoplasma penetrans).